We begin with the raw amino-acid sequence, 521 residues long: Protein TESPA1 (521 aa).

Ser-311 is subject to Phosphoserine. Positions 331–341 (QQDSDLGQFSQ) are enriched in polar residues. Disordered stretches follow at residues 331–351 (QQDS…AEGK) and 461–521 (QQKW…GKDS). Basic and acidic residues predominate over residues 466-475 (QSVDRPELRR). Acidic residues predominate over residues 485–498 (FDLEEVQSNSEEEQ). The segment covering 505–514 (SRPRHPHHHQ) has biased composition (basic residues).

In terms of assembly, interacts with PLCG1 and GRB2; the association is increased with prolonged stimulation of the TCR and may facilitate the assembly of the LAT signalosome. Interacts with ITPR1. Also interacts with ITPR3. Interacts with HSPA9. Post-translationally, may be phosphorylated in response to store-operated Ca(+2) entry.

The protein localises to the cytoplasm. Its subcellular location is the endoplasmic reticulum membrane. Its function is as follows. Required for the development and maturation of T-cells, its function being essential for the late stages of thymocyte development. Plays a role in T-cell antigen receptor (TCR)-mediated activation of the ERK and NFAT signaling pathways, possibly by serving as a scaffolding protein that promotes the assembly of the LAT signalosome in thymocytes. May play a role in the regulation of inositol 1,4,5-trisphosphate receptor-mediated Ca(2+) release and mitochondrial Ca(2+) uptake via the mitochondria-associated endoplasmic reticulum membrane (MAM) compartment. The protein is Protein TESPA1 (TESPA1) of Homo sapiens (Human).